Consider the following 98-residue polypeptide: Derivative of benzaldehyde biosynthesis cluster protein C (98 aa).

The protein belongs to the YciI family.

The protein operates within secondary metabolite biosynthesis. Part of the gene cluster that mediates the biosynthesis of the antibiotic 2,4-dihydroxy-3-methyl-6-(2-oxopropyl)benzaldehyde (DHMBA) and its derivatives. The direct non-reducing polyketide synthase dbaI product is 2,4-dihydroxy-3-methyl-6-(2-oxopropyl)benzaldehyde (DHMBA), produced by condensation of one acetyl-CoA starter unit with 4 malonyl-CoA units and one methylation step. The FAD-dependent monooxygenase dbaH is responsible for the synthesis of yellow pigments derived from the oxidation of DHMBA. The roles of dbaB, C, E and F have still to be determined. The sequence is that of Derivative of benzaldehyde biosynthesis cluster protein C from Emericella nidulans (strain FGSC A4 / ATCC 38163 / CBS 112.46 / NRRL 194 / M139) (Aspergillus nidulans).